Reading from the N-terminus, the 250-residue chain is Probable phosphatase VPA1527 (250 aa).

9 residues coordinate Zn(2+): His8, His10, His16, His41, Glu74, His102, His132, Asp194, and His196.

This sequence belongs to the PHP family. It depends on Zn(2+) as a cofactor.

The chain is Probable phosphatase VPA1527 from Vibrio parahaemolyticus serotype O3:K6 (strain RIMD 2210633).